Reading from the N-terminus, the 251-residue chain is Hydroxyacylglutathione hydrolase (251 aa).

Residues His53, His55, Asp57, His58, His110, Asp127, and His165 each coordinate Zn(2+).

It belongs to the metallo-beta-lactamase superfamily. Glyoxalase II family. In terms of assembly, monomer. Zn(2+) is required as a cofactor.

It carries out the reaction an S-(2-hydroxyacyl)glutathione + H2O = a 2-hydroxy carboxylate + glutathione + H(+). It participates in secondary metabolite metabolism; methylglyoxal degradation; (R)-lactate from methylglyoxal: step 2/2. Thiolesterase that catalyzes the hydrolysis of S-D-lactoyl-glutathione to form glutathione and D-lactic acid. The sequence is that of Hydroxyacylglutathione hydrolase from Yersinia pseudotuberculosis serotype IB (strain PB1/+).